The following is a 982-amino-acid chain: Capsid protein (982 aa).

Disordered stretches follow at residues 592 to 613 and 628 to 655; these read VFRS…RWLT and EPPA…HEEE. A compositionally biased stretch (basic and acidic residues) spans 597–613; sequence PRRESTTTTDDSPRWLT. Positions 635 to 649 are enriched in polar residues; it reads GRSSSPVTSSISEGT.

In terms of assembly, homomultimer.

It localises to the virion. Its function is as follows. Capsid protein self-assembles to form an icosahedral capsid with a T=1 symmetry, about 35-40 nm in diameter. This chain is Capsid protein (p2), found in Penicillium chrysogenum virus (isolate Caston/2003) (PcV).